Reading from the N-terminus, the 178-residue chain is Protein GrpE (178 aa).

It belongs to the GrpE family. Homodimer.

It is found in the cytoplasm. Participates actively in the response to hyperosmotic and heat shock by preventing the aggregation of stress-denatured proteins, in association with DnaK and GrpE. It is the nucleotide exchange factor for DnaK and may function as a thermosensor. Unfolded proteins bind initially to DnaJ; upon interaction with the DnaJ-bound protein, DnaK hydrolyzes its bound ATP, resulting in the formation of a stable complex. GrpE releases ADP from DnaK; ATP binding to DnaK triggers the release of the substrate protein, thus completing the reaction cycle. Several rounds of ATP-dependent interactions between DnaJ, DnaK and GrpE are required for fully efficient folding. The protein is Protein GrpE of Rickettsia prowazekii (strain Madrid E).